Consider the following 364-residue polypeptide: 2-oxoglutarate-dependent dioxygenase imqE (364 aa).

The interval 73-92 (KQKAAHPPGPNPQRGWSGIG) is disordered. The Fe2OG dioxygenase domain maps to 199 to 315 (DGSELRLLHY…RWSAAYFFKA (117 aa)). Fe cation is bound by residues H227, D229, and H287. 2-oxoglutarate is bound at residue R306.

It belongs to the iron/ascorbate-dependent oxidoreductase family. Fe(2+) is required as a cofactor.

The protein operates within secondary metabolite biosynthesis. Functionally, 2-oxoglutarate-dependent dioxygenase; part of the gene cluster that mediates the biosynthesis of imizoquins A to D, tripeptide-derived alkaloids that serve a protective role against oxidative stress that are essential for normal germination. ImqB is a canonical three-module NRPS that assembles the tripeptide backbone of the imizoquins via condensation of Trp, Tyr, and Leu-derived precursors. N-methylation by imqF and phenol oxidation by imqC, followed by cyclization via the FAD-dependent oxidase imqH carry out the three-step transformation of L-tyrosine into tetrahydroisoquinoline. Importantly, this sequence requires the presence of a free amine in the tyrosine moiety, indicating that isoquinoline formation occurs prior to peptide bond formation. The imidazolidin-4-one ring of imizoquins could form following additional oxidation of the methyl-derived bridgehead carbon by imqH. Lastly, O-methylation by imqG and leucine hydroxylation by imqE complete biosynthesis of the imizoquins. In Aspergillus flavus (strain ATCC 200026 / FGSC A1120 / IAM 13836 / NRRL 3357 / JCM 12722 / SRRC 167), this protein is 2-oxoglutarate-dependent dioxygenase imqE.